The following is a 341-amino-acid chain: KRR1 small subunit processome component homolog (341 aa).

A KH domain is found at 126–194; sequence DIIKIGNLVH…VRDIVLETMN (69 aa). Residues 230 to 244 are compositionally biased toward basic residues; that stretch reads KNKNISKRKQPKSRK. The tract at residues 230–327 is disordered; it reads KNKNISKRKQ…RPSEASKVDV (98 aa). A coiled-coil region spans residues 271–341; it reads FLNKEQKQAK…AKLLKANKQK (71 aa). Composition is skewed to basic and acidic residues over residues 272 to 303 and 313 to 327; these read LNKE…RNKD and EQNR…KVDV.

This sequence belongs to the KRR1 family. As to quaternary structure, monomer. Component of the ribosomal small subunit (SSU) processome.

The protein resides in the nucleus. It is found in the nucleolus. Functionally, required for 40S ribosome biogenesis. Involved in nucleolar processing of pre-18S ribosomal RNA and ribosome assembly. Binds to RNA. Required for female germline development, cell viability during eye development and for survival of dividing cells and epithelial cells during early wing disk development. The chain is KRR1 small subunit processome component homolog from Drosophila grimshawi (Hawaiian fruit fly).